Here is a 285-residue protein sequence, read N- to C-terminus: Putative pyruvate, phosphate dikinase regulatory protein (285 aa).

165–172 (GVSRTSKT) is a binding site for ADP.

This sequence belongs to the pyruvate, phosphate/water dikinase regulatory protein family. PDRP subfamily.

It catalyses the reaction N(tele)-phospho-L-histidyl/L-threonyl-[pyruvate, phosphate dikinase] + ADP = N(tele)-phospho-L-histidyl/O-phospho-L-threonyl-[pyruvate, phosphate dikinase] + AMP + H(+). The catalysed reaction is N(tele)-phospho-L-histidyl/O-phospho-L-threonyl-[pyruvate, phosphate dikinase] + phosphate + H(+) = N(tele)-phospho-L-histidyl/L-threonyl-[pyruvate, phosphate dikinase] + diphosphate. Functionally, bifunctional serine/threonine kinase and phosphorylase involved in the regulation of the pyruvate, phosphate dikinase (PPDK) by catalyzing its phosphorylation/dephosphorylation. This is Putative pyruvate, phosphate dikinase regulatory protein from Lactobacillus delbrueckii subsp. bulgaricus (strain ATCC BAA-365 / Lb-18).